The sequence spans 673 residues: Putative lipase atg15 (673 aa).

The Cytoplasmic portion of the chain corresponds to 1-7 (MPRKRSR). A helical; Signal-anchor for type II membrane protein membrane pass occupies residues 8 to 28 (FELSIHSLLLSVAVLSGAAYA). Residues 29-673 (SGYYPPSQQV…AVTSAPTPTS (645 aa)) are Lumenal-facing. 5 N-linked (GlcNAc...) asparagine glycosylation sites follow: asparagine 156, asparagine 191, asparagine 213, asparagine 271, and asparagine 295. Serine 311 serves as the catalytic Charge relay system. A glycan (N-linked (GlcNAc...) asparagine) is linked at asparagine 457.

The protein belongs to the AB hydrolase superfamily. Lipase family. In terms of assembly, binds to both phosphatidylinositol (PI) and phosphatidylinositol 3,5-bisphosphate (PIP2).

Its subcellular location is the endosome. The protein localises to the multivesicular body membrane. The protein resides in the prevacuolar compartment membrane. The enzyme catalyses a triacylglycerol + H2O = a diacylglycerol + a fatty acid + H(+). Functionally, lipase which is essential for lysis of subvacuolar cytoplasm to vacuole targeted bodies and intravacuolar autophagic bodies. Involved in the lysis of intravacuolar multivesicular body (MVB) vesicles. The intravacuolar membrane disintegration by atg15 is critical to life span extension. In Penicillium rubens (strain ATCC 28089 / DSM 1075 / NRRL 1951 / Wisconsin 54-1255) (Penicillium chrysogenum), this protein is Putative lipase atg15 (atg15).